Reading from the N-terminus, the 316-residue chain is UPF0761 membrane protein PM1616 (316 aa).

The next 6 membrane-spanning stretches (helical) occupy residues 36–56, 92–112, 128–148, 172–192, 204–224, and 236–256; these read MLALVPLVMVVFSVFSAFPVF, QMSAVGVISLVVVALMLINSI, LVFSFAIYWLILTLGPLLIGA, ILSFVPFFLTWLIFTLIYTVV, IGALVAAVFFTLGKQAFLWYV, and AMATLPIMLLWIQLSWVVILI.

The protein belongs to the UPF0761 family.

It localises to the cell inner membrane. This is UPF0761 membrane protein PM1616 from Pasteurella multocida (strain Pm70).